The sequence spans 885 residues: DNA mismatch repair protein MutS (885 aa).

Residue 626–633 participates in ATP binding; the sequence is GPNMGGKS.

This sequence belongs to the DNA mismatch repair MutS family.

In terms of biological role, this protein is involved in the repair of mismatches in DNA. It is possible that it carries out the mismatch recognition step. This protein has a weak ATPase activity. This Burkholderia cenocepacia (strain ATCC BAA-245 / DSM 16553 / LMG 16656 / NCTC 13227 / J2315 / CF5610) (Burkholderia cepacia (strain J2315)) protein is DNA mismatch repair protein MutS.